A 172-amino-acid polypeptide reads, in one-letter code: uncharacterized protein (172 aa).

Belongs to the flavoredoxin family. FMN serves as cofactor.

This is an uncharacterized protein from Pyrococcus abyssi (strain GE5 / Orsay).